Reading from the N-terminus, the 171-residue chain is S-ribosylhomocysteine lyase (171 aa).

The Fe cation site is built by His-54, His-58, and Cys-128.

This sequence belongs to the LuxS family. Homodimer. It depends on Fe cation as a cofactor.

It carries out the reaction S-(5-deoxy-D-ribos-5-yl)-L-homocysteine = (S)-4,5-dihydroxypentane-2,3-dione + L-homocysteine. In terms of biological role, involved in the synthesis of autoinducer 2 (AI-2) which is secreted by bacteria and is used to communicate both the cell density and the metabolic potential of the environment. The regulation of gene expression in response to changes in cell density is called quorum sensing. Catalyzes the transformation of S-ribosylhomocysteine (RHC) to homocysteine (HC) and 4,5-dihydroxy-2,3-pentadione (DPD). The sequence is that of S-ribosylhomocysteine lyase from Edwardsiella ictaluri (strain 93-146).